The sequence spans 338 residues: Ferredoxin--NADP reductase (338 aa).

Positions 38, 46, 51, 91, 125, 291, and 331 each coordinate FAD.

Belongs to the ferredoxin--NADP reductase type 2 family. As to quaternary structure, homodimer. It depends on FAD as a cofactor.

The enzyme catalyses 2 reduced [2Fe-2S]-[ferredoxin] + NADP(+) + H(+) = 2 oxidized [2Fe-2S]-[ferredoxin] + NADPH. The chain is Ferredoxin--NADP reductase from Orientia tsutsugamushi (strain Boryong) (Rickettsia tsutsugamushi).